The following is a 314-amino-acid chain: Fibrinogen-like protein 1 (314 aa).

Residues 1-22 (MGEIRSFLLVTIALMMGREIWA) form the signal peptide. Positions 25-59 (NSKCLLEQERLRAQVQQLETRVKQQQARIAQLMHE) form a coiled coil. The Fibrinogen C-terminal domain occupies 76 to 308 (LGGKRQYADC…SVVMKIRPND (233 aa)). 2 disulfide bridges follow: C85/C114 and C250/C263.

As to quaternary structure, homodimer. Interacts (via the Fibrinogen C-terminal domain) with LAG3 (via Ig-like domains 1 and 2).

It is found in the secreted. Functionally, immune suppressive molecule that inhibits antigen-specific T-cell activation by acting as a major ligand of LAG3. Responsible for LAG3 T-cell inhibitory function. Binds LAG3 independently from MHC class II (MHC-II). Secreted by, and promotes growth of, hepatocytes. The chain is Fibrinogen-like protein 1 from Mesocricetus auratus (Golden hamster).